A 156-amino-acid chain; its full sequence is Small ribosomal subunit protein uS7 (156 aa).

The protein belongs to the universal ribosomal protein uS7 family. As to quaternary structure, part of the 30S ribosomal subunit. Contacts proteins S9 and S11.

One of the primary rRNA binding proteins, it binds directly to 16S rRNA where it nucleates assembly of the head domain of the 30S subunit. Is located at the subunit interface close to the decoding center, probably blocks exit of the E-site tRNA. In Neisseria gonorrhoeae (strain ATCC 700825 / FA 1090), this protein is Small ribosomal subunit protein uS7.